The sequence spans 186 residues: ADP-ribosylation factor-like protein 8A (186 aa).

An intramembrane region (note=Mediates targeting to membranes) is located at residues 1–19; that stretch reads MLALFNKLLDWFKALFWKE. GTP is bound by residues 29 to 35, 71 to 75, and 130 to 133; these read QYSGKTT, DIGGQ, and NKRD.

This sequence belongs to the small GTPase superfamily. Arf family.

The protein resides in the late endosome membrane. The protein localises to the lysosome membrane. Its function is as follows. May play a role in lysosomes motility. Alternatively, may play a role in chromosome segregation. The chain is ADP-ribosylation factor-like protein 8A (arl8a) from Xenopus tropicalis (Western clawed frog).